A 164-amino-acid polypeptide reads, in one-letter code: Hoefavidin (164 aa).

The N-terminal stretch at 1–22 (MNKVLAIVLTITVAGFAQTAFA) is a signal peptide. In terms of domain architecture, Avidin-like spans 32–155 (KLLAGASNWV…GQDDFMQSVA (124 aa)). 5 residues coordinate biotin: Asn-42, Ser-46, Tyr-68, Asn-70, and Gly-76. The cysteines at positions 77 and 108 are disulfide-linked. Biotin-binding residues include Ser-110, Thr-112, and Asp-148.

This sequence belongs to the avidin/streptavidin family. Exhibits a dynamic oligomeric assembly: the apo form exits as homooctamers, which dissociate into homodimers upon biotin binding. The X-ray structure of the intact hoefavidin reveals unique crystal packing generated by an octameric cylindrical structure wherein the C-terminal segments of each monomer are introduced into the entrance of the biotin-binding site of an adjacent non-canonical monomer.

The protein localises to the secreted. Its function is as follows. The exact role played by hoefavidin in the host organism is still obscure. Forms a strong non-covalent complex with biotin and 2-iminobiotin. The polypeptide is Hoefavidin (Hoeflea phototrophica (strain DSM 17068 / NCIMB 14078 / DFL-43)).